Here is a 353-residue protein sequence, read N- to C-terminus: Methionine import ATP-binding protein MetN (353 aa).

The region spanning 7-249 is the ABC transporter domain; that stretch reads LENIDVTFKQ…PKEELSRQFV (243 aa). An ATP-binding site is contributed by 41-48; it reads GYSGAGKS.

This sequence belongs to the ABC transporter superfamily. Methionine importer (TC 3.A.1.24) family. As to quaternary structure, the complex is composed of two ATP-binding proteins (MetN), two transmembrane proteins (MetI) and a solute-binding protein (MetQ).

It is found in the cell membrane. The enzyme catalyses L-methionine(out) + ATP + H2O = L-methionine(in) + ADP + phosphate + H(+). It carries out the reaction D-methionine(out) + ATP + H2O = D-methionine(in) + ADP + phosphate + H(+). Part of the ABC transporter complex MetNIQ involved in methionine import. Responsible for energy coupling to the transport system. In Ligilactobacillus salivarius (strain UCC118) (Lactobacillus salivarius), this protein is Methionine import ATP-binding protein MetN.